The chain runs to 349 residues: UDP-galactose/UDP-glucose transporter 4 (349 aa).

8 helical membrane-spanning segments follow: residues W23–C43, G56–F76, I115–L135, P140–A160, N167–G187, M205–G225, A248–A268, and L293–V313. The segment at P316 to V349 is disordered. Positions E340 to V349 are enriched in acidic residues.

Belongs to the nucleotide-sugar transporter family. UDP-galactose:UMP antiporter (TC 2.A.7.11) subfamily.

The protein resides in the membrane. Functionally, sugar transporter involved in the transport of nucleotide-sugars from cytoplasm into the Golgi and/or the endoplasmic reticulum. The protein is UDP-galactose/UDP-glucose transporter 4 of Arabidopsis thaliana (Mouse-ear cress).